Consider the following 215-residue polypeptide: Probable phosphoglycerate mutase GpmB (215 aa).

Residues 8-15, 21-22, arginine 58, arginine 60, 82-85, 104-105, and 151-152 contribute to the substrate site; these read RHGETQWN, QG, ELDM, RR, and GI. The Tele-phosphohistidine intermediate role is filled by histidine 9. Catalysis depends on glutamate 82, which acts as the Proton donor/acceptor.

This sequence belongs to the phosphoglycerate mutase family. GpmB subfamily.

It catalyses the reaction (2R)-2-phosphoglycerate = (2R)-3-phosphoglycerate. It participates in carbohydrate degradation; glycolysis; pyruvate from D-glyceraldehyde 3-phosphate: step 3/5. The chain is Probable phosphoglycerate mutase GpmB from Klebsiella pneumoniae subsp. pneumoniae (strain ATCC 700721 / MGH 78578).